The primary structure comprises 274 residues: Large ribosomal subunit protein uL2 (274 aa).

The disordered stretch occupies residues 220 to 259 (VRGAAMNPRDHPHGGGEGRAPRGMSTPKTKWGKPARGVKT). Basic and acidic residues predominate over residues 227–239 (PRDHPHGGGEGRA). The segment covering 249–259 (KWGKPARGVKT) has biased composition (basic residues).

Belongs to the universal ribosomal protein uL2 family. Part of the 50S ribosomal subunit. Forms a bridge to the 30S subunit in the 70S ribosome.

Its function is as follows. One of the primary rRNA binding proteins. Required for association of the 30S and 50S subunits to form the 70S ribosome, for tRNA binding and peptide bond formation. It has been suggested to have peptidyltransferase activity; this is somewhat controversial. Makes several contacts with the 16S rRNA in the 70S ribosome. In Chloroflexus aggregans (strain MD-66 / DSM 9485), this protein is Large ribosomal subunit protein uL2.